A 744-amino-acid chain; its full sequence is MKESEDIIINNQNRCTLHPNKNLEFLCLDCKFMPCCSLCTSRKGEHHGHKTDSLESSASNIHSLINDFKDNIYPKLIERKENDQILLKESNETFKEIQSQNDDNNNLLKNEFKQIHNILSFVELDIEKQLSTNLDQNILINTIITSSINNDNKIISTILNNNNNSIIDKLNYFTQINNQQDNDDNDDCYQIDTDTIELIKQYQNSLLILKNSNNINNLTKLKEYNNQILKFDNQTINNIKNSFKSIYSFGDIPNDAIDYNINNNNNNNNNNNNNNNNELNNSNNKNEFIKILNHNFYIYSESDESSFLTDDFESLAFKDNCNILSKLKKLPNNVLLLSGFNQKLTKGIIPEGVKVLYIGDIKQELIIDSIPNTVTTVGLWYGFNQKLTKGIIPEGVKELRLGDIKQELIIDSIPSTLTTVILCDGFNQKLTKGIIPEGVKVLYIGDIKQELIIDSIPNTVTRVRLLDGFNQKLTKGIIPESVKELHIGNIKQELIIDSIPNTVTTITLCDGFNQKLTKGIIPEGVKELYIGNLKQELIIDSIPNTVTTVRLCDGFNQKLTKGIIPEGVKELYIRDIKQELIIDSIPNTVTTVILCDGFNQKLTKGIIPEWVKGLCLGDIKQELIIDSIPNTVTTVRLLDGFNQKLTKGIIPESVKELYIDDIKQELIIDSIPNTVTTVRLLDGFNQKLTKGIIPEWVKELHIGDIKQELIIDSIPNTLNNVYIYKSCKKLIYSFVPVNVKIVNI.

FNIP repeat units follow at residues 340 to 376 (FNQK…TVTT), 383 to 422 (FNQK…TVIL), 426 to 462 (FNQK…TVTR), 469 to 508 (FNQK…TITL), 512 to 550 (FNQK…TTVR), 555 to 594 (FNQK…TVIL), 598 to 635 (FNQK…VTTV), 641 to 678 (FNQK…VTTV), and 684 to 723 (FNQK…NVYI).

This Dictyostelium discoideum (Social amoeba) protein is FNIP repeat-containing protein cigB (cigB).